Reading from the N-terminus, the 914-residue chain is Dynamin-2A (914 aa).

The residue at position 1 (methionine 1) is an N-acetylmethionine. Residues proline 35–proline 303 enclose the Dynamin-type G domain. Positions glycine 45–serine 52 are G1 motif. Glycine 45–serine 52 lines the GTP pocket. The interval alanine 71–arginine 73 is G2 motif. Positions aspartate 143–glycine 146 are G3 motif. GTP contacts are provided by residues aspartate 143 to leucine 147 and glycine 204 to aspartate 207. A G4 motif region spans residues glycine 204 to aspartate 207. A G5 motif region spans residues alanine 238 to glycine 241. Residues arginine 507–aspartate 522 are compositionally biased toward basic and acidic residues. Disordered stretches follow at residues arginine 507–proline 570 and proline 629–aspartate 648. Polar residues predominate over residues alanine 523 to glutamine 535. Basic and acidic residues-rich tracts occupy residues serine 547–proline 560 and glutamate 634–asparagine 645. Residues glycine 572–glutamine 696 enclose the PH domain. The 94-residue stretch at leucine 730–alanine 823 folds into the GED domain. Positions asparagine 781–serine 805 form a coiled coil. The segment at arginine 821 to tyrosine 914 is disordered. 2 stretches are compositionally biased toward polar residues: residues serine 826–arginine 839 and alanine 852–lysine 866.

The protein belongs to the TRAFAC class dynamin-like GTPase superfamily. Dynamin/Fzo/YdjA family. As to quaternary structure, binds PtdIns3P. Interacts with SH3P3 (via SH3 domain) and (via C-terminus) with GAMMA-ADR. May homooligomerize or heterooligomerize.

Its subcellular location is the cytoplasm. It is found in the cytosol. The protein localises to the golgi apparatus membrane. It localises to the cytoskeleton. The protein resides in the phragmoplast. Its subcellular location is the cytoplasmic vesicle. It is found in the clathrin-coated vesicle. It carries out the reaction GTP + H2O = GDP + phosphate + H(+). With respect to regulation, increased GTPase activity in the presence of phosphatidic acid. Functionally, microtubule-associated force-producing protein involved in clathrin-mediated vesicle trafficking from the trans-Golgi network to the central vacuole. Able to bind and hydrolyze GTP. Binds specifically to phosphatidylinositol 3-phosphate (PtdIns3P). This Arabidopsis thaliana (Mouse-ear cress) protein is Dynamin-2A (DRP2A).